Consider the following 74-residue polypeptide: uncharacterized protein (74 aa).

This is an uncharacterized protein from Vaccinia virus (strain Copenhagen) (VACV).